Consider the following 153-residue polypeptide: MAELDRIDLKILRALADDGRLSWRDLAQKVGLSLTPTLRRVRRLEEEHYIQGYFARLDEERLSGAMSVFVSVSLEKQTGDYLARFEERIVDAPQVMSCFQMTGDADYMLRVVVKDLAAYQAFLTNTLTCIPGVAGIKSAFALKSVMLRSAPPL.

Residues 4–65 form the HTH asnC-type domain; it reads LDRIDLKILR…RLDEERLSGA (62 aa). The segment at residues 23 to 42 is a DNA-binding region (H-T-H motif); sequence WRDLAQKVGLSLTPTLRRVR.

Functionally, positive regulator of the bkd operon for branched-chain keto acid dehydrogenase complex. In Pseudomonas aeruginosa (strain ATCC 15692 / DSM 22644 / CIP 104116 / JCM 14847 / LMG 12228 / 1C / PRS 101 / PAO1), this protein is Bkd operon transcriptional regulator (bkdR).